We begin with the raw amino-acid sequence, 388 residues long: Protein DJ-1 homolog D (388 aa).

PfpI endopeptidase domains follow at residues 5 to 190 (RTVL…KALG) and 198 to 383 (KRIL…ALLG). The Nucleophile role is filled by Cys-120. Cys-120 is subject to Cysteine sulfenic acid (-SOH). The active site involves His-121. Cys-313 serves as the catalytic Nucleophile. Cys-313 carries the post-translational modification Cysteine sulfinic acid (-SO2H). Residue His-314 is part of the active site.

The protein belongs to the peptidase C56 family. Homotrimer. Post-translationally, cys-120 and Cys-313 are oxidized to sulfinic acid.

The enzyme catalyses (R)-S-lactoylglutathione = methylglyoxal + glutathione. Possesses glyoxalase I activity. Catalyzes the conversion of hemimercaptal, formed from methylglyoxal and glutathione, to S-lactoylglutathione. May be involved in oxidative stress response. The polypeptide is Protein DJ-1 homolog D (DJ1D) (Arabidopsis thaliana (Mouse-ear cress)).